The sequence spans 969 residues: Translation initiation factor IF-2 (969 aa).

Positions 50-370 (SFASKSAPAN…QAPSVGGVRL (321 aa)) are disordered. Low complexity predominate over residues 54–76 (KSAPANGAKPGPAASARPGAKPT). A compositionally biased stretch (pro residues) spans 77–87 (PGGPRPGPRTP). Over residues 88–102 (APAASAPQAPAEQTA) the composition is skewed to low complexity. The span at 112–124 (AVKPGPAPTPARP) shows a compositional bias: pro residues. The segment covering 125 to 164 (AAPEAPAAKAAPEAPAQRPTPGGPRPGQQQQRPGAPAQGG) has biased composition (low complexity). Over residues 240–267 (PGGPRPSPGSMPPRPNPGAMPQRTPRPG) the composition is skewed to pro residues. A compositionally biased stretch (gly residues) spans 269–340 (SAGGRPGRPG…GAAGAFGRPG (72 aa)). Positions 344-353 (RRGRKSKRQK) are enriched in basic residues. Residues 465 to 636 (VRPPVVTVMG…AVLLTADAAL (172 aa)) enclose the tr-type G domain. Positions 474 to 481 (GHVDHGKT) are G1. GTP is bound at residue 474–481 (GHVDHGKT). Positions 499–503 (GITQH) are G2. The interval 524–527 (DTPG) is G3. GTP-binding positions include 524-528 (DTPGH) and 578-581 (NKID). The segment at 578–581 (NKID) is G4. The tract at residues 614–616 (SAK) is G5.

It belongs to the TRAFAC class translation factor GTPase superfamily. Classic translation factor GTPase family. IF-2 subfamily.

It localises to the cytoplasm. One of the essential components for the initiation of protein synthesis. Protects formylmethionyl-tRNA from spontaneous hydrolysis and promotes its binding to the 30S ribosomal subunits. Also involved in the hydrolysis of GTP during the formation of the 70S ribosomal complex. The protein is Translation initiation factor IF-2 of Nocardia farcinica (strain IFM 10152).